Consider the following 285-residue polypeptide: Dihydropteroate synthase (285 aa).

Residues 25-271 (TLVMGILNVT…DVKQIARMAK (247 aa)) enclose the Pterin-binding domain. A Mg(2+)-binding site is contributed by asparagine 32. Residues threonine 72, aspartate 106, asparagine 125, aspartate 189, lysine 225, and 259–261 (RVH) each bind (7,8-dihydropterin-6-yl)methyl diphosphate.

Belongs to the DHPS family. Mg(2+) serves as cofactor.

The enzyme catalyses (7,8-dihydropterin-6-yl)methyl diphosphate + 4-aminobenzoate = 7,8-dihydropteroate + diphosphate. The protein operates within cofactor biosynthesis; tetrahydrofolate biosynthesis; 7,8-dihydrofolate from 2-amino-4-hydroxy-6-hydroxymethyl-7,8-dihydropteridine diphosphate and 4-aminobenzoate: step 1/2. Its function is as follows. Catalyzes the condensation of para-aminobenzoate (pABA) with 6-hydroxymethyl-7,8-dihydropterin diphosphate (DHPt-PP) to form 7,8-dihydropteroate (H2Pte), the immediate precursor of folate derivatives. The protein is Dihydropteroate synthase (sul) of Bacillus subtilis (strain 168).